The primary structure comprises 227 residues: LexA repressor (227 aa).

Residues 25–45 (FDEMKDALDLRSKSGIHRLIT) constitute a DNA-binding region (H-T-H motif). Active-site for autocatalytic cleavage activity residues include serine 148 and lysine 186.

It belongs to the peptidase S24 family. Homodimer.

The catalysed reaction is Hydrolysis of Ala-|-Gly bond in repressor LexA.. Functionally, represses a number of genes involved in the response to DNA damage (SOS response), including recA and lexA. In the presence of single-stranded DNA, RecA interacts with LexA causing an autocatalytic cleavage which disrupts the DNA-binding part of LexA, leading to derepression of the SOS regulon and eventually DNA repair. The polypeptide is LexA repressor (Cereibacter sphaeroides (strain ATCC 17029 / ATH 2.4.9) (Rhodobacter sphaeroides)).